Consider the following 170-residue polypeptide: Macro domain-containing protein DR_2288 (170 aa).

The region spanning Met1 to Leu170 is the Macro domain.

It belongs to the MacroD-type family.

In Deinococcus radiodurans (strain ATCC 13939 / DSM 20539 / JCM 16871 / CCUG 27074 / LMG 4051 / NBRC 15346 / NCIMB 9279 / VKM B-1422 / R1), this protein is Macro domain-containing protein DR_2288.